The following is a 355-amino-acid chain: MLLDKLKPFVEKYNEINQMLSSPEITQDIKRMTKLSREARSLEPIVEKAKEYENIINTIEEAKMMLDDPEMAELAKEELKEAEEKLPELEEEIKILLLPKDPNDDKNIFLEIRAGTGGDEAALFVGDLLKAYLRYADNKGWKVEIVSESKSDAGGYKEIILLIKGESVYSRLKYEGGTHRVQRIPATESQGRIHTSAVTVAIMPEVDDVDIELDPKDIKIEVMRAGGAGGQHVNKTESAVRMTHIPTGITVSMQDERSQQRNKEKAMQILKARVFEKLENERLAAIGEARKSQVGSGDRSERIRTYNYPQNRITDHRIGLTLYRLEQIMSEGLFDEIIDPLIAHYQAEALKEAGL.

Q231 bears the N5-methylglutamine mark.

This sequence belongs to the prokaryotic/mitochondrial release factor family. Post-translationally, methylated by PrmC. Methylation increases the termination efficiency of RF1.

The protein localises to the cytoplasm. Peptide chain release factor 1 directs the termination of translation in response to the peptide chain termination codons UAG and UAA. The chain is Peptide chain release factor 1 from Nautilia profundicola (strain ATCC BAA-1463 / DSM 18972 / AmH).